The following is a 610-amino-acid chain: Probable methyltransferase PMT22 (610 aa).

Residues 1–10 (MIKNIFQSRK) are Cytoplasmic-facing. The helical; Signal-anchor for type II membrane protein transmembrane segment at 11 to 31 (LSGLCVLSILLVSVTILLLTN) threads the bilayer. The Lumenal segment spans residues 32-610 (DTIDLFPYLS…LVGLKSSWRP (579 aa)). The span at 56–69 (STPISSPTNDSSPP) shows a compositional bias: low complexity. Positions 56–81 (STPISSPTNDSSPPLESPVNQTRVDD) are disordered. N-linked (GlcNAc...) asparagine glycans are attached at residues Asn64, Asn75, Asn100, Asn400, Asn469, and Asn546.

The protein belongs to the methyltransferase superfamily.

It is found in the endoplasmic reticulum membrane. The protein is Probable methyltransferase PMT22 of Arabidopsis thaliana (Mouse-ear cress).